The sequence spans 73 residues: Conotoxin Leo-O2 (73 aa).

Residues methionine 1 to alanine 22 form the signal peptide. A propeptide spanning residues aspartate 23–arginine 47 is cleaved from the precursor. Intrachain disulfides connect cysteine 49/cysteine 59, cysteine 56/cysteine 64, and cysteine 58/cysteine 69.

It belongs to the conotoxin O1 superfamily. In terms of tissue distribution, expressed by the venom duct.

The protein resides in the secreted. This Conus leopardus (Leopard cone) protein is Conotoxin Leo-O2.